An 87-amino-acid polypeptide reads, in one-letter code: DNA-directed RNA polymerase subunit omega (87 aa).

The protein belongs to the RNA polymerase subunit omega family. In terms of assembly, the RNAP catalytic core consists of 2 alpha, 1 beta, 1 beta' and 1 omega subunit. When a sigma factor is associated with the core the holoenzyme is formed, which can initiate transcription.

The enzyme catalyses RNA(n) + a ribonucleoside 5'-triphosphate = RNA(n+1) + diphosphate. Its function is as follows. Promotes RNA polymerase assembly. Latches the N- and C-terminal regions of the beta' subunit thereby facilitating its interaction with the beta and alpha subunits. This is DNA-directed RNA polymerase subunit omega from Ectopseudomonas mendocina (strain ymp) (Pseudomonas mendocina).